The primary structure comprises 445 residues: Phosphoglucosamine mutase (445 aa).

Ser-102 functions as the Phosphoserine intermediate in the catalytic mechanism. Residues Ser-102, Asp-241, Asp-243, and Asp-245 each contribute to the Mg(2+) site. Residue Ser-102 is modified to Phosphoserine.

It belongs to the phosphohexose mutase family. Requires Mg(2+) as cofactor. Activated by phosphorylation.

It carries out the reaction alpha-D-glucosamine 1-phosphate = D-glucosamine 6-phosphate. In terms of biological role, catalyzes the conversion of glucosamine-6-phosphate to glucosamine-1-phosphate. This chain is Phosphoglucosamine mutase, found in Citrobacter koseri (strain ATCC BAA-895 / CDC 4225-83 / SGSC4696).